A 392-amino-acid polypeptide reads, in one-letter code: Galactokinase (392 aa).

Substrate is bound at residue 40-43 (EHID). Residues Ser74 and 128–134 (GSGLSSS) contribute to the ATP site. The Mg(2+) site is built by Ser134 and Glu167. Asp179 functions as the Proton acceptor in the catalytic mechanism. Tyr229 contacts substrate.

This sequence belongs to the GHMP kinase family. GalK subfamily.

The protein localises to the cytoplasm. The catalysed reaction is alpha-D-galactose + ATP = alpha-D-galactose 1-phosphate + ADP + H(+). The protein operates within carbohydrate metabolism; galactose metabolism. Catalyzes the transfer of the gamma-phosphate of ATP to D-galactose to form alpha-D-galactose-1-phosphate (Gal-1-P). This Clostridium tetani (strain Massachusetts / E88) protein is Galactokinase.